The chain runs to 580 residues: High affinity choline transporter 1 (580 aa).

At 1-6 (MPFHVE) the chain is on the extracellular side. The chain crosses the membrane as a helical span at residues 7 to 27 (GLVAIILFYLLIFLVGIWAAW). Topologically, residues 28–48 (KTKNSGNAEERSEAIIVGGRD) are cytoplasmic. The chain crosses the membrane as a helical span at residues 49 to 69 (IGLLVGGFTMTATWVGGGYIN). At 70–81 (GTAEAVYGPGCG) the chain is on the extracellular side. The chain crosses the membrane as a helical span at residues 82-102 (LAWAQAPIGYSLSLILGGLFF). Over 103 to 125 (AKPMRSKGYVTMLDPFQQIYGKR) the chain is Cytoplasmic. Residues 126–146 (MGGLLFIPALMGEMFWAAAIF) traverse the membrane as a helical segment. The Extracellular portion of the chain corresponds to 147 to 164 (SALGATISVIIDVDVNIS). Residues 165–185 (VIVSALIAILYTLVGGLYSVA) traverse the membrane as a helical segment. Over 186–191 (YTDVVQ) the chain is Cytoplasmic. Residues 192-212 (LFCIFIGLWISVPFALSHPAV) form a helical membrane-spanning segment. Over 213–237 (TDIGFTAVHAKYQSPWLGTIESVEV) the chain is Extracellular. A helical transmembrane segment spans residues 238 to 258 (YTWLDNFLLLMLGGIPWQAYF). The Cytoplasmic portion of the chain corresponds to 259-274 (QRVLSSSSATYAQVLS). The helical transmembrane segment at 275–295 (FLAAFGCLVMALPAICIGAIG) threads the bilayer. Residues 296–317 (ASTDWNQTAYGFPDPKTKEEAD) are Extracellular-facing. Residue asparagine 301 is glycosylated (N-linked (GlcNAc...) asparagine). The helical transmembrane segment at 318–338 (MILPIVLQYLCPVYISFFGLG) threads the bilayer. Topologically, residues 339–376 (AVSAAVMSSADSSILSASSMFARNIYQLSFRQNASDKE) are cytoplasmic. The helical transmembrane segment at 377–397 (IVWVMRITVFVFGASATAMAL) threads the bilayer. The Extracellular portion of the chain corresponds to 398 to 406 (LTKTVYGLW). A helical membrane pass occupies residues 407-427 (YLSSDLVYIIIFPQLLCVLFI). The Cytoplasmic portion of the chain corresponds to 428-435 (KGTNTYGA). A helical transmembrane segment spans residues 436 to 456 (VAGYIFGLFLRITGGEPYLYL). Residues 457–481 (QPLIFYPGYYPDKNGIYNQRFPFKT) lie on the Extracellular side of the membrane. Residues 482-502 (LSMVTSFFTNICVSYLAKYLF) form a helical membrane-spanning segment. Residues 502–580 (FESGTLPPKL…EGSGTEDNLQ (79 aa)) are mediates interaction with SEC14L1. The Cytoplasmic portion of the chain corresponds to 503-580 (ESGTLPPKLD…EGSGTEDNLQ (78 aa)). A Dileucine-like motif motif is present at residues 527 to 532 (DKTILV).

Belongs to the sodium:solute symporter (SSF) (TC 2.A.21) family. In terms of assembly, homooligomerizes at cell surface. Interacts with SEC14L1; may regulate SLC5A7. Phosphorylated. As to expression, expressed in basal forebrain, brain stem, spinal chord, and striatum. Specific for cholinergic neurons.

The protein localises to the presynaptic cell membrane. It is found in the cell projection. Its subcellular location is the axon. The protein resides in the early endosome membrane. It localises to the cytoplasmic vesicle. The protein localises to the secretory vesicle. It is found in the synaptic vesicle membrane. It carries out the reaction choline(out) + n Na(+)(out) = choline(in) + n Na(+)(in). Choline uptake activity is regulated by SLC5A7/CHT1 internalization (inactive form) from the cell surface and recycling of internalized SLC5A7/CHT1 into the cell surface (active form). Activated by extracellular chloride ion. Specifically inhibited by nanomolar concentrations of hemicholinium 3. High-affinity Na(+)-coupled choline transmembrane symporter. Functions as an electrogenic, voltage-dependent transporter with variable charge/choline stoichiometry. Choline uptake and choline-induced current is also Cl(-)-dependent where Cl(-) is likely a regulatory ion rather than cotransported ion. Plays a critical role in acetylcholine (ACh) synthesis by taking up the substrate choline from the synaptic cleft into the presynaptic nerve terminals after neurotransmitter release. SLC5A7/CHT1-mediated choline high-affinity transport in cholinergic neurons is the rate-limiting step for production of ACh, thereby facilitating communication by subsequent action potentials. Localized predominantly in presynaptic terminal intracellular organelles, and translocated to the plasma membrane in active form in response to neuronal activity. The sequence is that of High affinity choline transporter 1 from Rattus norvegicus (Rat).